We begin with the raw amino-acid sequence, 289 residues long: Shikimate dehydrogenase (NADP(+)) (289 aa).

Shikimate contacts are provided by residues 22–24 (SRS) and Thr-69. The Proton acceptor role is filled by Lys-73. Position 85 (Glu-85) interacts with NADP(+). Asn-94 and Asp-109 together coordinate shikimate. NADP(+) is bound by residues 134-138 (GAGGA), 158-163 (NRTLSR), and Ile-226. Residue Tyr-228 participates in shikimate binding. Residue Gly-249 participates in NADP(+) binding.

The protein belongs to the shikimate dehydrogenase family. Homodimer.

The catalysed reaction is shikimate + NADP(+) = 3-dehydroshikimate + NADPH + H(+). Its pathway is metabolic intermediate biosynthesis; chorismate biosynthesis; chorismate from D-erythrose 4-phosphate and phosphoenolpyruvate: step 4/7. Functionally, involved in the biosynthesis of the chorismate, which leads to the biosynthesis of aromatic amino acids. Catalyzes the reversible NADPH linked reduction of 3-dehydroshikimate (DHSA) to yield shikimate (SA). This Brucella abortus (strain S19) protein is Shikimate dehydrogenase (NADP(+)).